We begin with the raw amino-acid sequence, 226 residues long: Ras-related protein Rab11A (226 aa).

GTP contacts are provided by residues 24 to 32 (GDSAVGKSQ), 43 to 49 (SLDSKST), 72 to 76 (DTAGQ), 130 to 133 (NKCD), and 160 to 162 (SAL). An Effector region motif is present at residues 46 to 54 (SKSTIGVEF). S-geranylgeranyl cysteine attachment occurs at residues cysteine 222 and cysteine 223. Cysteine 223 carries the cysteine methyl ester modification. Positions 224 to 226 (QAS) are cleaved as a propeptide — removed in mature form.

Belongs to the small GTPase superfamily. Rab family.

The protein localises to the cell membrane. The chain is Ras-related protein Rab11A (RAB11A) from Lotus japonicus (Lotus corniculatus var. japonicus).